Here is a 580-residue protein sequence, read N- to C-terminus: MFAGLQDLGVANGEDLKETLTNCTEPLKAIEQFQTENGVLLPSLQSALPFLDLHGTPRLEFHQSVFDELRDKLLERVSAIASEGKAEERYKKLEDLLEKSFSLVKMPSLQPVVMCVMKHLPKVPEKKLKLVMADKELYRACAVEVKRQIWQDNQALFGDEVSPLLKQYILEKESALFSTELSVLHNFFSPSPKTRRQGEVVQKLTQMVGKNVKLYDMVLQFLRTLFLRTRNVHYCTLRAELLMSLHDLDVSDICTVDPCHKFTWCLDACIRERFVDSKRARELQGFLDGVKKGQEQVLGDLSMILCDPFAINTLSLSTIRHLQELVSQETLPRDSPDLLLLLRLLALGQGAWDLIDSQVFKEPKMEAELITKFLPMLMSLVVDDFTFNVDQKLPAEEKASVTYPNTLPESFTKFLQEQRMACEVGLYYVLHITKQRNKNALLRLLPGLVETFGDLAFSDIFLHLLTGSLVLLADEFALEDFCSSLFDGFFLTASPRKENVHRHVLRLLLHLHARVAPSKLEALQKALEPTGQSGEAVKELYSQLGEKLEQLDHRKPSPTQAAETPALDLPLPSVPAPATL.

An N6-acetyllysine modification is found at lysine 519. The segment at 552-580 (DHRKPSPTQAAETPALDLPLPSVPAPATL) is disordered. At serine 557 the chain carries Phosphoserine.

Belongs to the NELF-B family. The NELF complex is composed of NELFA, NELFB, NELFCD and NELFE; the N-terminus of NELFB binds to the NELFA:NELFCD subcomplex. Binds RNA which may help to stabilize the NELF complex on nucleic acid Interacts with the first BRCT repeat of BRCA1. Interacts with KIAA1191. Isoform 1 and isoform 2 interact with NELFA, NELFCD and NELFE. As to expression, isoform 1 is expressed in the kidney, liver, adipose and lung. Isoform 2 is widely expressed.

The protein resides in the nucleus. In terms of biological role, essential component of the NELF complex, a complex that negatively regulates the elongation of transcription by RNA polymerase II (Pol II). The NELF complex, which acts via an association with the DSIF complex and causes transcriptional pausing, is counteracted by the P-TEFb kinase complex. May be able to induce chromatin unfolding. Essential for early embryogenesis; plays an important role in maintaining the undifferentiated state of embryonic stem cells (ESCs) by preventing unscheduled expression of developmental genes. Plays a key role in establishing the responsiveness of stem cells to developmental cues; facilitates plasticity and cell fate commitment in ESCs by establishing the appropriate expression level of signaling molecules. Supports the transcription of genes involved in energy metabolism in cardiomyocytes; facilitates the association of transcription initiation factors with the promoters of the metabolism-related genes. This Mus musculus (Mouse) protein is Negative elongation factor B (Nelfb).